The primary structure comprises 337 residues: Anthranilate phosphoribosyltransferase (337 aa).

Residues G80, 83-84 (GD), T88, 90-93 (NIST), 108-116 (KHGNRAVSS), and S120 contribute to the 5-phospho-alpha-D-ribose 1-diphosphate site. G80 is a binding site for anthranilate. Position 92 (S92) interacts with Mg(2+). Residue N111 coordinates anthranilate. Anthranilate is bound at residue R166. Positions 224 and 225 each coordinate Mg(2+).

This sequence belongs to the anthranilate phosphoribosyltransferase family. In terms of assembly, homodimer. Requires Mg(2+) as cofactor.

The catalysed reaction is N-(5-phospho-beta-D-ribosyl)anthranilate + diphosphate = 5-phospho-alpha-D-ribose 1-diphosphate + anthranilate. It functions in the pathway amino-acid biosynthesis; L-tryptophan biosynthesis; L-tryptophan from chorismate: step 2/5. Its function is as follows. Catalyzes the transfer of the phosphoribosyl group of 5-phosphorylribose-1-pyrophosphate (PRPP) to anthranilate to yield N-(5'-phosphoribosyl)-anthranilate (PRA). The polypeptide is Anthranilate phosphoribosyltransferase (Anaeromyxobacter dehalogenans (strain 2CP-1 / ATCC BAA-258)).